We begin with the raw amino-acid sequence, 121 residues long: uncharacterized protein (121 aa).

The HTH gntR-type domain maps to 9–77 (KPIYLQIADQ…RGQGTFIAEK (69 aa)). The segment at residues 37-56 (VREMAIQTKVNPNTIQRTYS) is a DNA-binding region (H-T-H motif).

This is an uncharacterized protein from Bacillus subtilis (strain 168).